The primary structure comprises 215 residues: MPGEATETVPATEQELPQPQAETGSGTESDSDESVPELEEQDSTQATTQQAQLAAAAEIDEEPVSKAKQSRSEKKARKAMSKLGLRQVTGVTRVTIRKSKNILFVITKPDVYKSPASDTYIVFGEAKIEDLSQQAQLAAAEKFKVQGEAVSNIQENTQTPTVQEESEEEEVDETDVEVKDIELVMSQANVSRAKAVRALKNNSNDIVNAIMELTM.

The segment at 1 to 81 is disordered; sequence MPGEATETVP…SEKKARKAMS (81 aa). Over residues 9 to 28 the composition is skewed to polar residues; that stretch reads VPATEQELPQPQAETGSGTE. Residues 29 to 42 show a composition bias toward acidic residues; that stretch reads SDSDESVPELEEQD. At serine 43 the chain carries Phosphoserine; by ILK1. Low complexity predominate over residues 44 to 57; sequence TQATTQQAQLAAAA. Residues 69–80 are required for DNA-binding; that stretch reads QSRSEKKARKAM. Residues 70–135 enclose the NAC-A/B domain; sequence SRSEKKARKA…AKIEDLSQQA (66 aa). Residues 93 to 108 are RNA/DNA-binding; the sequence is RVTIRKSKNILFVITK. Serine 132 is modified (phosphoserine). Lysine 142 carries the N6-acetyllysine; alternate modification. Lysine 142 is covalently cross-linked (Glycyl lysine isopeptide (Lys-Gly) (interchain with G-Cter in SUMO2); alternate). Position 159 is a phosphothreonine; by GSK3-beta (threonine 159). Threonine 161 bears the Phosphothreonine mark. 4 positions are modified to phosphoserine: serine 166, serine 186, serine 191, and serine 203. The UBA domain maps to 176–213; sequence VEVKDIELVMSQANVSRAKAVRALKNNSNDIVNAIMEL.

It belongs to the NAC-alpha family. As to quaternary structure, part of the nascent polypeptide-associated complex (NAC), which is a heterodimer of NACA and BTF3 (via NAC-A/B domains). NAC associates with ribosomes through the BTF3/NACB subunit and contacts the ribosomal protein L23, which is positioned near the exiting site. Both subunits can contact nascent polypeptide chains. NACA may also form homodimers, and only this form binds DNA. Interacts with TBP and JUN. Post-translationally, phosphorylation of Ser-43 by ILK during cell adhesion may promote nuclear localization. Phosphorylation of Thr-159 by GSK3B may promote proteasome mediated degradation.

The protein resides in the cytoplasm. Its subcellular location is the nucleus. In terms of biological role, prevents inappropriate targeting of non-secretory polypeptides to the endoplasmic reticulum (ER). Binds to nascent polypeptide chains as they emerge from the ribosome and blocks their interaction with the signal recognition particle (SRP), which normally targets nascent secretory peptides to the ER. Also reduces the inherent affinity of ribosomes for protein translocation sites in the ER membrane (M sites). May act as a specific coactivator for JUN, binding to DNA and stabilizing the interaction of JUN homodimers with target gene promoters. The protein is Nascent polypeptide-associated complex subunit alpha (NACA) of Pongo abelii (Sumatran orangutan).